The following is a 614-amino-acid chain: Male-specific lethal 1 homolog (614 aa).

Disordered stretches follow at residues 1-127 (MTMR…GCSP) and 147-217 (KEPT…GASS). A phosphoserine mark is found at serine 66 and serine 126. The segment covering 158–169 (GAASPAATASDP) has biased composition (low complexity). The segment covering 170-184 (AGPPPLPLPGPPPLA) has biased composition (pro residues). Over residues 185–194 (PTATAGTLAA) the composition is skewed to low complexity. Serine 205 carries the phosphoserine modification. The stretch at 213–282 (SGASSQAACL…KDNEKERHKL (70 aa)) forms a coiled coil. Residues 223–237 (KQILLLQLDLIEQQQ) form an interaction with MSL2 region. Basic and acidic residues-rich tracts occupy residues 272–281 (KKDNEKERHK) and 294–304 (TELSEKIKLEC). A disordered region spans residues 272–420 (KKDNEKERHK…PKEKAFSSEI (149 aa)). Residue lysine 301 forms a Glycyl lysine isopeptide (Lys-Gly) (interchain with G-Cter in SUMO2) linkage. Residues 317–346 (PKPFSCGRSGKGHKRKSPFGSTERKTPVKK) carry the Nuclear localization signal motif. N6-acetyllysine is present on lysine 353. Glycyl lysine isopeptide (Lys-Gly) (interchain with G-Cter in SUMO2) cross-links involve residues lysine 365 and lysine 378. A compositionally biased stretch (basic and acidic residues) spans 376–392 (VCKRELRSQETPEKPRS). A Phosphoserine modification is found at serine 393. A compositionally biased stretch (polar residues) spans 393-407 (SVDTPPRLSTPQKGP). The residue at position 396 (threonine 396) is a Phosphothreonine. Serine 442 is subject to Phosphoserine. The PEHE domain occupies 472 to 591 (VLAVPSWRDH…LTPQNFELPW (120 aa)). Positions 496–514 (ENLDDSVFSKRHAKLELDE) are interaction with KAT8 HAT domain. A Bipartite nuclear localization signal motif is present at residues 505 to 519 (KRHAKLELDEKRRKR). The interval 550 to 591 (EVTSFFPEPDDVESLMITPFLPVVAFGRPLPKLTPQNFELPW) is sufficient for interaction with MSL3 MRG domain.

It belongs to the msl-1 family. In terms of assembly, component of a multisubunit histone acetyltransferase complex (MSL) at least composed of the KAT8/MOF/MYST1, MSL1/hampin, MSL2 and MSL3. Forms a MSL heterotetrameric core with MSL2. Interacts (via PEHE domain) with KAT8 (via HAT domain) and MSL3 (via MRG domain); both interactions are direct. Directly interacts with NUPR1. Interacts with TP53BP1; this interaction may be required for MSL1 DNA repair activity, but not for histone acetyltransferase activity. Interacts with TTC4, ECM2 and PIHD1. In terms of processing, sumoylated with SUMO1.

It is found in the nucleus. Its subcellular location is the nucleoplasm. The protein localises to the nucleus speckle. Its function is as follows. Non-catalytic component of the MSL histone acetyltransferase complex, a multiprotein complex that mediates the majority of histone H4 acetylation at 'Lys-16' (H4K16ac), an epigenetic mark that prevents chromatin compaction. The MSL complex is required for chromosome stability and genome integrity by maintaining homeostatic levels of H4K16ac. The MSL complex is also involved in gene dosage by promoting up-regulation of genes expressed by the X chromosome. X up-regulation is required to compensate for autosomal biallelic expression. The MSL complex also participates in gene dosage compensation by promoting expression of Tsix non-coding RNA. Within the MSL complex, acts as a scaffold to tether MSL3 and KAT8 together for enzymatic activity regulation. Greatly enhances MSL2 E3 ubiquitin ligase activity, promoting monoubiquitination of histone H2B at 'Lys-34' (H2BK34Ub). This modification in turn stimulates histone H3 methylation at 'Lys-4' (H3K4me) and 'Lys-79' (H3K79me) and leads to gene activation, including that of HOXA9 and MEIS1. The chain is Male-specific lethal 1 homolog from Homo sapiens (Human).